We begin with the raw amino-acid sequence, 111 residues long: Nucleoid-associated protein PputW619_3586 (111 aa).

Positions 87 to 111 (EQSSQEKMGGMTAGMQLPPGFKMPF) are disordered.

The protein belongs to the YbaB/EbfC family. In terms of assembly, homodimer.

The protein localises to the cytoplasm. It is found in the nucleoid. In terms of biological role, binds to DNA and alters its conformation. May be involved in regulation of gene expression, nucleoid organization and DNA protection. This is Nucleoid-associated protein PputW619_3586 from Pseudomonas putida (strain W619).